A 530-amino-acid polypeptide reads, in one-letter code: Proline--tRNA ligase, cytoplasmic (530 aa).

It belongs to the class-II aminoacyl-tRNA synthetase family.

The protein localises to the cytoplasm. It localises to the cytosol. It catalyses the reaction tRNA(Pro) + L-proline + ATP = L-prolyl-tRNA(Pro) + AMP + diphosphate. Functionally, catalyzes the attachment of proline to tRNA(Pro) in a two-step reaction: proline is first activated by ATP to form Pro-AMP and then transferred to the acceptor end of tRNA(Pro). The polypeptide is Proline--tRNA ligase, cytoplasmic (Arabidopsis thaliana (Mouse-ear cress)).